We begin with the raw amino-acid sequence, 42 residues long: Phospholipase A1 (42 aa).

It belongs to the AB hydrolase superfamily. Lipase family. Contains six disulfide bonds. As to expression, expressed by the venom gland.

It is found in the secreted. The catalysed reaction is a 1,2-diacyl-sn-glycero-3-phosphocholine + H2O = a 2-acyl-sn-glycero-3-phosphocholine + a fatty acid + H(+). In terms of biological role, catalyzes the hydrolysis of phosphatidylcholine with phospholipase A1 activity. May act as an allergen and induce hemolytic activity. In Polistes gallicus (Paper wasp), this protein is Phospholipase A1.